The primary structure comprises 294 residues: Nucleotide-binding protein Dtur_1129 (294 aa).

10-17 (GLSGAGKS) provides a ligand contact to ATP. 61 to 64 (DIRT) lines the GTP pocket.

Belongs to the RapZ-like family.

In terms of biological role, displays ATPase and GTPase activities. The sequence is that of Nucleotide-binding protein Dtur_1129 from Dictyoglomus turgidum (strain DSM 6724 / Z-1310).